Here is a 385-residue protein sequence, read N- to C-terminus: Odorant receptor 47a (385 aa).

Residues 1–33 (MDSFLQVQKSTIALLGFDLFSENREMWKRPYRA) lie on the Cytoplasmic side of the membrane. The chain crosses the membrane as a helical span at residues 34-54 (MNVFSIAAIFPFILAAVLHNW). Topologically, residues 55-62 (KNVLLLAD) are extracellular. A helical membrane pass occupies residues 63–83 (AMVALLITILGLFKFSMILYL). Residues 84-129 (RRDFKRLIDKFRLLMSNEAEQGEEYAEILNAANKQDQRMCTLFRTC) lie on the Cytoplasmic side of the membrane. Residues 130 to 150 (FLLAWALNSVLPLVRMGLSYW) form a helical membrane-spanning segment. The Extracellular portion of the chain corresponds to 151–175 (LAGHAEPELPFPCLFPWNIHIIRNY). A helical transmembrane segment spans residues 176-196 (VLSFIWSAFASTGVVLPAVSL). Over 197–255 (DTIFCSFTSNLCAFFKIAQYKVVRFKGGSLKESQATLNKVFALYQTSLDMCNDLNQCYQ) the chain is Cytoplasmic. A helical membrane pass occupies residues 256–276 (PIICAQFFISSLQLCMLGYLF). The Extracellular portion of the chain corresponds to 277-284 (SITFAQTE). The helical transmembrane segment at 285–305 (GVYYASFIATIIIQAYIYCYC) threads the bilayer. Residues 306–357 (GENLKTESASFEWAIYDSPWHESLGAGGASTSICRSLLISMMRAHRGFRITG) lie on the Cytoplasmic side of the membrane. Residues 358–378 (YFFEANMEAFSSIVRTAMSYI) traverse the membrane as a helical segment. Topologically, residues 379-385 (TMLRSFS) are extracellular.

This sequence belongs to the insect chemoreceptor superfamily. Heteromeric odorant receptor channel (TC 1.A.69) family. Or1a subfamily. Interacts with Orco. Complexes exist early in the endomembrane system in olfactory sensory neurons (OSNs), coupling these complexes to the conserved ciliary trafficking pathway. As to expression, expressed with Orco in 40 olfactory receptor neurons in a broad area across the antenna, including both anterior and posterior faces. This expression pattern matches the distribution of the small sensilla basiconica. Expression in the antenna is observed late in antennal development at 93 hours APF.

Its subcellular location is the cell membrane. In terms of biological role, odorant receptor which mediates acceptance or avoidance behavior, depending on its substrates. The odorant receptor repertoire encodes a large collection of odor stimuli that vary widely in identity, intensity, and duration. Complexes with Orco to form odorant-sensing units, providing sensitive and prolonged odorant signaling and calcium permeability. They are necessary and sufficient to promote functional reconstitution of odor-evoked signaling in sensory neurons that normally respond only to carbon dioxide. Involved in the behavioral responses to esters. Involved in the behavioral responses to pentyl acetate. The polypeptide is Odorant receptor 47a (Or47a) (Drosophila melanogaster (Fruit fly)).